The following is a 236-amino-acid chain: LHFPL tetraspan subfamily member 3 protein (236 aa).

4 helical membrane-spanning segments follow: residues 36–56 (IGVLWAIFTICFAIVNVVCFI), 110–130 (FFIGLSMMLIIACIICFTLFF), 140–160 (ICAWMQLTSAACLVLGCMIFP), and 191–211 (ILAIIGILDALILSFLAFVLG).

The protein belongs to the LHFP family.

Its subcellular location is the membrane. The polypeptide is LHFPL tetraspan subfamily member 3 protein (Homo sapiens (Human)).